The following is a 372-amino-acid chain: Homeobox protein Nkx-2.1 (372 aa).

Residues 161–220 (RRKRRVLFSQAQVYELERRFKQQKYLSAPEREHLASMIHLTPTQVKIWFQNHRYKMKRQA) constitute a DNA-binding region (homeobox). Disordered stretches follow at residues 219-258 (QAKDKAAQQQLQQDSGGGGGGGGGAGCPQQQQAQQQSPRR), 269-288 (KPCQAGAPAPGAASLQSHAQ), and 312-340 (AGLGAHPGHQPGSAGQSPDLAHHAASPAG). The segment covering 233–244 (SGGGGGGGGGAG) has biased composition (gly residues). Residues 245 to 254 (CPQQQQAQQQ) are compositionally biased toward low complexity. A Phosphoserine modification is found at S255. Residues 273–288 (AGAPAPGAASLQSHAQ) show a composition bias toward low complexity.

It belongs to the NK-2 homeobox family. Interacts with WWTR1. In terms of processing, phosphorylated on serine residues by STK3/MST2. As to expression, thyroid, lung and brain.

It is found in the nucleus. Its function is as follows. Transcription factor that binds and activates the promoter of thyroid specific genes such as thyroglobulin, thyroperoxidase, and thyrotropin receptor. Crucial in the maintenance of the thyroid differentiation phenotype. May play a role in lung development and surfactant homeostasis. Forms a regulatory loop with GRHL2 that coordinates lung epithelial cell morphogenesis and differentiation. Activates the transcription of GNRHR and plays a role in enhancing the circadian oscillation of its gene expression. Represses the transcription of the circadian transcriptional repressor NR1D1. In Mus musculus (Mouse), this protein is Homeobox protein Nkx-2.1.